Consider the following 110-residue polypeptide: Mobility group protein 1B (110 aa).

Positions 5–71 (PKRPLSAYML…NYIRALQEYE (67 aa)) form a DNA-binding region, HMG box. Residues 71-81 (ERNGGGGDDKG) show a composition bias toward basic and acidic residues. The tract at residues 71–110 (ERNGGGGDDKGKKRKGAAPKKGAGKKSKKGAHSDDDGDSE) is disordered. A compositionally biased stretch (basic residues) spans 82–100 (KKRKGAAPKKGAGKKSKKG).

It belongs to the HMGB family.

It localises to the nucleus. The protein resides in the chromosome. Its function is as follows. Found in condensed chromomeres. Binds preferentially to AT-rich DNA. This is Mobility group protein 1B (HMG1B) from Chironomus tentans (Midge).